The following is a 117-amino-acid chain: Large ribosomal subunit protein uL22 (117 aa).

This sequence belongs to the universal ribosomal protein uL22 family. As to quaternary structure, part of the 50S ribosomal subunit.

Its function is as follows. This protein binds specifically to 23S rRNA; its binding is stimulated by other ribosomal proteins, e.g. L4, L17, and L20. It is important during the early stages of 50S assembly. It makes multiple contacts with different domains of the 23S rRNA in the assembled 50S subunit and ribosome. The globular domain of the protein is located near the polypeptide exit tunnel on the outside of the subunit, while an extended beta-hairpin is found that lines the wall of the exit tunnel in the center of the 70S ribosome. The sequence is that of Large ribosomal subunit protein uL22 from Lactobacillus helveticus (strain DPC 4571).